The sequence spans 89 residues: Alpha-latrotoxin associated low molecular weight protein SGV242-280 (89 aa).

Positions methionine 1–cysteine 18 are cleaved as a signal peptide.

Belongs to the arthropod CHH/MIH/GIH/VIH hormone family. In terms of tissue distribution, expressed by the venom gland.

The protein localises to the secreted. May increase the toxicity of alpha-latrotoxin and/or other venom components. Is non-toxic to mice and to the cockroach Periplaneta americana. The sequence is that of Alpha-latrotoxin associated low molecular weight protein SGV242-280 from Steatoda grossa (False black widow).